The following is a 172-amino-acid chain: Large ribosomal subunit protein uL10 (172 aa).

Belongs to the universal ribosomal protein uL10 family. In terms of assembly, part of the ribosomal stalk of the 50S ribosomal subunit. The N-terminus interacts with L11 and the large rRNA to form the base of the stalk. The C-terminus forms an elongated spine to which L12 dimers bind in a sequential fashion forming a multimeric L10(L12)X complex.

Its function is as follows. Forms part of the ribosomal stalk, playing a central role in the interaction of the ribosome with GTP-bound translation factors. This is Large ribosomal subunit protein uL10 from Rhodopseudomonas palustris (strain HaA2).